A 400-amino-acid polypeptide reads, in one-letter code: Probable vacuolar protease A (400 aa).

A signal peptide spans 1 to 18; it reads MKGSLLLAGATLLGCTSA. Residues 19 to 72 constitute a propeptide, activation peptide; the sequence is KLHSLKLKKVSLKEQLEHADIDVQIKSLGQKYMGIRPEQHEQQMFKEQTPIEVE. In terms of domain architecture, Peptidase A1 spans 87–397; the sequence is YFSEISIGTP…DLGKGTVGLA (311 aa). Residue aspartate 105 is part of the active site. Cysteine 118 and cysteine 123 form a disulfide bridge. An N-linked (GlcNAc...) asparagine glycan is attached at asparagine 140. Residue aspartate 289 is part of the active site. A disulfide bond links cysteine 323 and cysteine 356. Residue asparagine 340 is glycosylated (N-linked (GlcNAc...) asparagine).

It belongs to the peptidase A1 family.

It is found in the vacuole lumen. It localises to the secreted. It catalyses the reaction Hydrolysis of proteins with broad specificity for peptide bonds. Cleaves -Leu-Leu-|-Val-Tyr- bond in a synthetic substrate. Does not act on esters of Tyr or Arg.. Functionally, vacuolar aspartic endopeptidase which is probably also secreted and contributes to virulence. The polypeptide is Probable vacuolar protease A (PEP2) (Arthroderma benhamiae (strain ATCC MYA-4681 / CBS 112371) (Trichophyton mentagrophytes)).